Here is a 177-residue protein sequence, read N- to C-terminus: Large ribosomal subunit protein uL6 (177 aa).

The protein belongs to the universal ribosomal protein uL6 family. Part of the 50S ribosomal subunit.

In terms of biological role, this protein binds to the 23S rRNA, and is important in its secondary structure. It is located near the subunit interface in the base of the L7/L12 stalk, and near the tRNA binding site of the peptidyltransferase center. This is Large ribosomal subunit protein uL6 from Hahella chejuensis (strain KCTC 2396).